Consider the following 1024-residue polypeptide: Beta-galactosidase (1024 aa).

2 residues coordinate substrate: Asn103 and Asp202. Residue Asp202 participates in Na(+) binding. Mg(2+)-binding residues include Glu417, His419, and Glu462. Substrate-binding positions include Glu462 and 538–541 (EYAH). The active-site Proton donor is Glu462. The active-site Nucleophile is Glu538. Position 598 (Asn598) interacts with Mg(2+). Residues Phe602 and Asn605 each coordinate Na(+). Residues Asn605 and Trp1000 each contribute to the substrate site.

Belongs to the glycosyl hydrolase 2 family. As to quaternary structure, homotetramer. Mg(2+) serves as cofactor. It depends on Na(+) as a cofactor.

It catalyses the reaction Hydrolysis of terminal non-reducing beta-D-galactose residues in beta-D-galactosides.. The chain is Beta-galactosidase from Escherichia coli O9:H4 (strain HS).